We begin with the raw amino-acid sequence, 47 residues long: Large ribosomal subunit protein bL34 (47 aa).

The segment at 1–47 (MVTEGLKPHISIKKKKRKSGFLARMRTKSGRKIIARRRRKGRKRLAP) is disordered. Over residues 10–47 (ISIKKKKRKSGFLARMRTKSGRKIIARRRRKGRKRLAP) the composition is skewed to basic residues.

It belongs to the bacterial ribosomal protein bL34 family.

This chain is Large ribosomal subunit protein bL34 (rpmH), found in Aquifex aeolicus (strain VF5).